Here is a 23-residue protein sequence, read N- to C-terminus: Pseudin-3 (23 aa).

Expressed by the skin glands.

The protein localises to the secreted. Its function is as follows. Possesses antifungal activity against C.albicans and is also active against E.coli and S.aureus. This chain is Pseudin-3, found in Pseudis paradoxa (Paradoxical frog).